We begin with the raw amino-acid sequence, 316 residues long: uncharacterized protein (316 aa).

This sequence belongs to the chlamydial CPn_0441/CT_007/TC_0275 family.

This is an uncharacterized protein from Chlamydia muridarum (strain MoPn / Nigg).